A 206-amino-acid chain; its full sequence is MLVVLLTAALLVLSSAHGSDEEVIYEDSSSQLLDVEQQNQKHGQHHQKPPPASDENGDGDDSDDGDDDGSGDDGNRPERPPPHGGNHQRPPPGHHHGPPPSGGPQTSSQPGNPQGPPPQGGPQGPPQPGNPQGPPPQGGPQQRPPQPGKPQGPPPQGGPQGPPQPGNPQGPPPQGGHQQRPPQPRKPQDPAQDATHEQPSYLWFSS.

The signal sequence occupies residues 1–13 (MLVVLLTAALLVL). Residues 15–206 (SAHGSDEEVI…EQPSYLWFSS (192 aa)) are disordered. Residues 55-71 (ENGDGDDSDDGDDDGSG) are compositionally biased toward acidic residues. 6 repeat units span residues 80–97 (PPPHGGNHQRPPPGHHHG), 98–115 (PPPSGGPQTSSQPGNPQG), 116–133 (PPPQGGPQGPPQPGNPQG), 134–152 (PPPQGGPQQRPPQPGKPQG), 153–170 (PPPQGGPQGPPQPGNPQG), and 171–189 (PPPQGGHQQRPPQPRKPQD). Residues 80 to 189 (PPPHGGNHQR…RPPQPRKPQD (110 aa)) are 6 X 18 AA approximate tandem repeats. The span at 103 to 112 (GPQTSSQPGN) shows a compositional bias: low complexity. Pro residues predominate over residues 113–174 (PQGPPPQGGP…PGNPQGPPPQ (62 aa)).

It is found in the secreted. In terms of biological role, may protect teeth by binding to tannins. The chain is Acidic proline-rich protein PRP33 (Prpg1) from Rattus norvegicus (Rat).